A 475-amino-acid chain; its full sequence is Aspartyl/glutamyl-tRNA(Asn/Gln) amidotransferase subunit B (475 aa).

It belongs to the GatB/GatE family. GatB subfamily. As to quaternary structure, heterotrimer of A, B and C subunits.

It catalyses the reaction L-glutamyl-tRNA(Gln) + L-glutamine + ATP + H2O = L-glutaminyl-tRNA(Gln) + L-glutamate + ADP + phosphate + H(+). The enzyme catalyses L-aspartyl-tRNA(Asn) + L-glutamine + ATP + H2O = L-asparaginyl-tRNA(Asn) + L-glutamate + ADP + phosphate + 2 H(+). Allows the formation of correctly charged Asn-tRNA(Asn) or Gln-tRNA(Gln) through the transamidation of misacylated Asp-tRNA(Asn) or Glu-tRNA(Gln) in organisms which lack either or both of asparaginyl-tRNA or glutaminyl-tRNA synthetases. The reaction takes place in the presence of glutamine and ATP through an activated phospho-Asp-tRNA(Asn) or phospho-Glu-tRNA(Gln). This is Aspartyl/glutamyl-tRNA(Asn/Gln) amidotransferase subunit B from Staphylococcus aureus (strain MRSA252).